The primary structure comprises 214 residues: Large ribosomal subunit protein uL3 (214 aa).

Glutamine 151 carries the post-translational modification N5-methylglutamine.

It belongs to the universal ribosomal protein uL3 family. In terms of assembly, part of the 50S ribosomal subunit. Forms a cluster with proteins L14 and L19. Post-translationally, methylated by PrmB.

In terms of biological role, one of the primary rRNA binding proteins, it binds directly near the 3'-end of the 23S rRNA, where it nucleates assembly of the 50S subunit. In Saccharophagus degradans (strain 2-40 / ATCC 43961 / DSM 17024), this protein is Large ribosomal subunit protein uL3.